An 850-amino-acid chain; its full sequence is Mitochondrial escape protein 2 (850 aa).

The N-terminal 44 residues, 1 to 44 (MLLVRTTSLNVSRMPVPCLARGIGILKGKYRLANLMNAQPSVRH), are a transit peptide targeting the mitochondrion. The segment at 44 to 66 (HVSSEIQQKDQQAGESNTATDTG) is disordered. Residues 45–287 (VSSEIQQKDQ…VSNFFTNHTR (243 aa)) lie on the Mitochondrial matrix side of the membrane. Residues 47–64 (SEIQQKDQQAGESNTATD) are compositionally biased toward polar residues. The region spanning 198 to 272 (TTIVIKFQGP…TVLHIQYENI (75 aa)) is the RRM domain. The chain crosses the membrane as a helical span at residues 288-308 (IAIPVLFALLSIFAVLVFDPI). Residues 309 to 850 (REFSIEQKIT…CEEEIKNLSK (542 aa)) are Mitochondrial intermembrane-facing. Positions 607 to 621 (KGENVKEPESEKEIA) are enriched in basic and acidic residues. A disordered region spans residues 607-633 (KGENVKEPESEKEIAENNDSDSEADTS).

This sequence belongs to the YME2 family.

It localises to the mitochondrion inner membrane. Functionally, plays a role in maintaining the mitochondrial genome and in controlling the mtDNA escape. Involved in the regulation of mtDNA nucleotide structure and number. May have a dispensable role in early maturation of pre-rRNA. The protein is Mitochondrial escape protein 2 (YME2) of Saccharomyces cerevisiae (strain YJM789) (Baker's yeast).